A 397-amino-acid chain; its full sequence is Staphyloferrin A transporter (397 aa).

12 helical membrane-spanning segments follow: residues 10 to 30 (FLLF…VLTT), 39 to 59 (IVNF…GAIA), 67 to 87 (LLRI…VLTY), 93 to 110 (PISV…LSAV), 137 to 157 (FIIN…LAVY), 162 to 182 (TFLA…PLHF), 213 to 233 (IFIT…LLPV), 245 to 265 (IFGI…LVLP), 271 to 292 (IGMV…LGVV), 296 to 313 (IVIM…SQWA), 333 to 353 (VLSI…LMSI), and 358 to 378 (FGIV…TMVF).

This sequence belongs to the major facilitator superfamily.

The protein resides in the cell membrane. Functionally, involved in staphyloferrin A secretion. The protein is Staphyloferrin A transporter of Staphylococcus aureus (strain NCTC 8325 / PS 47).